The chain runs to 189 residues: UPF0301 protein RrIowa_0061 (189 aa).

Belongs to the UPF0301 (AlgH) family.

The polypeptide is UPF0301 protein RrIowa_0061 (Rickettsia rickettsii (strain Iowa)).